The following is a 320-amino-acid chain: Ribose-phosphate pyrophosphokinase 1 (320 aa).

ATP contacts are provided by residues 39 to 41 and 98 to 99; these read DGE and RQ. Residues H132 and D173 each coordinate Mg(2+). K196 is a catalytic residue. D-ribose 5-phosphate contacts are provided by residues R198, D224, and 228–232; that span reads DTAGT.

It belongs to the ribose-phosphate pyrophosphokinase family. Class I subfamily. As to quaternary structure, homohexamer. Mg(2+) serves as cofactor.

It localises to the cytoplasm. It catalyses the reaction D-ribose 5-phosphate + ATP = 5-phospho-alpha-D-ribose 1-diphosphate + AMP + H(+). The protein operates within metabolic intermediate biosynthesis; 5-phospho-alpha-D-ribose 1-diphosphate biosynthesis; 5-phospho-alpha-D-ribose 1-diphosphate from D-ribose 5-phosphate (route I): step 1/1. Involved in the biosynthesis of the central metabolite phospho-alpha-D-ribosyl-1-pyrophosphate (PRPP) via the transfer of pyrophosphoryl group from ATP to 1-hydroxyl of ribose-5-phosphate (Rib-5-P). This is Ribose-phosphate pyrophosphokinase 1 from Streptococcus pyogenes serotype M1.